We begin with the raw amino-acid sequence, 357 residues long: 5-hydroxytryptamine receptor 5A (357 aa).

The Extracellular segment spans residues 1 to 36 (MDLPINLTSFSLSTPSTLEPNRSLDTEALRTSQSFL). 2 N-linked (GlcNAc...) asparagine glycosylation sites follow: Asn6 and Asn21. A helical membrane pass occupies residues 37 to 63 (SAFRVLVLTLLGFLAAATFTWNLLVLA). Residues 64 to 76 (TILRVRTFHRVPH) lie on the Cytoplasmic side of the membrane. A helical membrane pass occupies residues 77-103 (NLVASMAISDVLVAVLVMPLSLVHELS). Residues 104 to 114 (GRRWQLGRRLC) are Extracellular-facing. Cys114 and Cys192 form a disulfide bridge. Residues 115-137 (QLWIACDVLCCTASIWNVTAIAL) form a helical membrane-spanning segment. Asp121 contributes to the serotonin binding site. Over 138–155 (DRYWSITRHLEYTLRARK) the chain is Cytoplasmic. The helical transmembrane segment at 156 to 176 (RVSNVMILLTWALSAVISLAP) threads the bilayer. Residues 177 to 198 (LLFGWGETYSELSEECQVSREP) lie on the Extracellular side of the membrane. A helical transmembrane segment spans residues 199–220 (SYTVFSTVGAFYLPLCVVLFVY). At 221–287 (WKIYKAAKFR…QKEQRAALMV (67 aa)) the chain is on the cytoplasmic side. Residues 288-312 (GILIGVFVLCWFPFFVTELISPLCS) traverse the membrane as a helical segment. The Extracellular portion of the chain corresponds to 313 to 314 (WD). The chain crosses the membrane as a helical span at residues 315 to 339 (IPALWKSIFLWLGYSNSFFNPLIYT). The Cytoplasmic portion of the chain corresponds to 340–357 (AFNRSYSSAFKVFFSKQQ).

This sequence belongs to the G-protein coupled receptor 1 family. In terms of tissue distribution, central nervous system.

The protein resides in the cell membrane. Its function is as follows. G-protein coupled receptor for 5-hydroxytryptamine (serotonin), a biogenic hormone that functions as a neurotransmitter, a hormone and a mitogen. Also functions as a receptor for ergot alkaloid derivatives and other psychoactive substances. Ligand binding causes a conformation change that triggers signaling via guanine nucleotide-binding proteins (G proteins) and modulates the activity of downstream effectors. Htr5a is coupled to G(i)/G(o) G alpha proteins and mediates inhibitory neurotransmission: signaling inhibits adenylate cyclase activity and activates a phosphatidylinositol-calcium second messenger system that regulates the release of Ca(2+) ions from intracellular stores. In Rattus norvegicus (Rat), this protein is 5-hydroxytryptamine receptor 5A.